The sequence spans 379 residues: MTNATDTNKTLGESMFAQCGYAQDAIDKRVSQVWHEIFEGPNKFYWENDEGLAYVMDTGNNDVRTEGMSYAMMIALQYDRKDVFDKLWGWVMRHMYMKDGHHAHYFAWSVAPDGTPNSNGPAPDGEEYFAMDLFLASRRWGDGEDIYEYSAWGREILRYCVHKGERYDGEPMWNPDNKLIKFIPETEWSDPSYHLPHFYEVFAEEADEEDRPFWHEAAAASRRYLQAACDERTGMNAEYADYDGKPHVDESNHWHFYSDAYRTAANIGLDAAWNGPQEVLCDRVAALQRFFLTHDRTSVYAIDGTAVDEVVLHPVGFLAATAQGALAAVHSAQPDAEHNAREWVRMLWNTPMRTGTRRYYDNFLYAFAMLALSGKYRYE.

Glu-66 (proton donor) is an active-site residue. Asp-259 acts as the Proton acceptor in catalysis.

Belongs to the glycosyl hydrolase 8 (cellulase D) family.

It catalyses the reaction Hydrolysis of (1-&gt;4)-beta-D-xylose residues from the reducing end of oligosaccharides.. Its function is as follows. Hydrolyzes xylooligosaccharides with a degree of polymerization of greater than or equal to 3, releasing xylose from the reducing end. Has low activity on birchwood xylan, oat spelt xylan and arabinoxylan. The protein is Reducing end xylose-releasing exo-oligoxylanase of Bifidobacterium adolescentis (strain ATCC 15703 / DSM 20083 / NCTC 11814 / E194a).